Here is a 301-residue protein sequence, read N- to C-terminus: tRNA pseudouridine synthase B (301 aa).

The active-site Nucleophile is the Asp-38.

This sequence belongs to the pseudouridine synthase TruB family. Type 1 subfamily.

The enzyme catalyses uridine(55) in tRNA = pseudouridine(55) in tRNA. Its function is as follows. Responsible for synthesis of pseudouridine from uracil-55 in the psi GC loop of transfer RNAs. The chain is tRNA pseudouridine synthase B from Lacticaseibacillus paracasei (strain ATCC 334 / BCRC 17002 / CCUG 31169 / CIP 107868 / KCTC 3260 / NRRL B-441) (Lactobacillus paracasei).